The sequence spans 677 residues: DNA ligase (677 aa).

NAD(+) contacts are provided by residues 32 to 36 (DSEYD), 81 to 82 (SL), and Glu-112. Catalysis depends on Lys-114, which acts as the N6-AMP-lysine intermediate. Arg-135, Glu-171, Lys-288, and Lys-312 together coordinate NAD(+). Positions 416, 419, 434, and 439 each coordinate Zn(2+). Residues 598–677 (YKPLPLSGVE…QEFINMLEQS (80 aa)) form the BRCT domain.

It belongs to the NAD-dependent DNA ligase family. LigA subfamily. Mg(2+) is required as a cofactor. It depends on Mn(2+) as a cofactor.

The catalysed reaction is NAD(+) + (deoxyribonucleotide)n-3'-hydroxyl + 5'-phospho-(deoxyribonucleotide)m = (deoxyribonucleotide)n+m + AMP + beta-nicotinamide D-nucleotide.. Its function is as follows. DNA ligase that catalyzes the formation of phosphodiester linkages between 5'-phosphoryl and 3'-hydroxyl groups in double-stranded DNA using NAD as a coenzyme and as the energy source for the reaction. It is essential for DNA replication and repair of damaged DNA. This Dehalococcoides mccartyi (strain ATCC BAA-2266 / KCTC 15142 / 195) (Dehalococcoides ethenogenes (strain 195)) protein is DNA ligase.